The sequence spans 129 residues: Small ribosomal subunit protein uS11 (129 aa).

It belongs to the universal ribosomal protein uS11 family. Part of the 30S ribosomal subunit. Interacts with proteins S7 and S18. Binds to IF-3.

Functionally, located on the platform of the 30S subunit, it bridges several disparate RNA helices of the 16S rRNA. Forms part of the Shine-Dalgarno cleft in the 70S ribosome. The chain is Small ribosomal subunit protein uS11 from Photobacterium profundum (strain SS9).